Reading from the N-terminus, the 350-residue chain is Ion-translocating oxidoreductase complex subunit D (350 aa).

5 consecutive transmembrane segments (helical) span residues 20–40 (VMVL…YFFG), 44–64 (LIQI…ILKI), 68–88 (PVLN…LAIS), 89–109 (IPPL…IIFV), and 125–145 (MAGY…WLPV). The residue at position 187 (Thr-187) is an FMN phosphoryl threonine. 5 helical membrane passes run 215-235 (SWQQ…ILLF), 241-261 (WHIP…AFAY), 267-287 (APPL…FILS), 300-320 (ILYA…GGYP), and 322-342 (AVAF…YYTQ).

Belongs to the NqrB/RnfD family. The complex is composed of six subunits: RnfA, RnfB, RnfC, RnfD, RnfE and RnfG. FMN serves as cofactor.

It is found in the cell inner membrane. Functionally, part of a membrane-bound complex that couples electron transfer with translocation of ions across the membrane. This chain is Ion-translocating oxidoreductase complex subunit D, found in Psychromonas ingrahamii (strain DSM 17664 / CCUG 51855 / 37).